A 448-amino-acid chain; its full sequence is Argininosuccinate synthase (448 aa).

Residues A17–S25 and A43 each bind ATP. Residue Y99 coordinates L-citrulline. Residues G129 and T131 each coordinate ATP. Residues T131, N135, and D136 each contribute to the L-aspartate site. N135 provides a ligand contact to L-citrulline. Position 136 (D136) interacts with ATP. The L-citrulline site is built by R139 and S192. D194 contacts ATP. Positions 201, 203, and 280 each coordinate L-citrulline.

This sequence belongs to the argininosuccinate synthase family. Type 2 subfamily. Homotetramer.

Its subcellular location is the cytoplasm. It carries out the reaction L-citrulline + L-aspartate + ATP = 2-(N(omega)-L-arginino)succinate + AMP + diphosphate + H(+). It participates in amino-acid biosynthesis; L-arginine biosynthesis; L-arginine from L-ornithine and carbamoyl phosphate: step 2/3. In Pectobacterium atrosepticum (strain SCRI 1043 / ATCC BAA-672) (Erwinia carotovora subsp. atroseptica), this protein is Argininosuccinate synthase.